The following is a 139-amino-acid chain: Protein archease (139 aa).

Aspartate 12, aspartate 138, and isoleucine 139 together coordinate Ca(2+).

Belongs to the archease family.

In terms of biological role, activates the tRNA-splicing ligase complex by facilitating the enzymatic turnover of catalytic subunit RtcB. Acts by promoting the guanylylation of RtcB, a key intermediate step in tRNA ligation. Can also alter the NTP specificity of RtcB such that ATP, dGTP or ITP is used efficiently. This chain is Protein archease, found in Saccharolobus solfataricus (strain ATCC 35092 / DSM 1617 / JCM 11322 / P2) (Sulfolobus solfataricus).